The following is a 127-amino-acid chain: Succinate dehydrogenase cytochrome b560 subunit (127 aa).

Transmembrane regions (helical) follow at residues 36–53 and 60–83; these read VGLA…RIIL and NLLT…FILL. Residue histidine 88 coordinates heme. The helical transmembrane segment at 109 to 126 threads the bilayer; sequence LSKFSLFLLVSLSLILIF.

The protein belongs to the cytochrome b560 family. Forms part of complex II containing four subunits: a 70 kDa flavoprotein (FP), a 27 kDa iron-sulfur protein (IP), a cytochrome B and a membrane-anchoring protein. Requires heme as cofactor.

It localises to the mitochondrion inner membrane. Its pathway is carbohydrate metabolism; tricarboxylic acid cycle. Membrane-anchoring subunit of succinate dehydrogenase (SDH) that is involved in complex II of the mitochondrial electron transport chain and is responsible for transferring electrons from succinate to ubiquinone (coenzyme Q). This is Succinate dehydrogenase cytochrome b560 subunit (SDH3) from Chondrus crispus (Carrageen Irish moss).